The primary structure comprises 248 residues: PACRG-like protein (248 aa).

Position 1 is an N-acetylmethionine (M1). The span at M1 to Q29 shows a compositional bias: polar residues. A disordered region spans residues M1–G71. The segment covering S39–E49 has biased composition (low complexity). Phosphoserine is present on S47.

The sequence is that of PACRG-like protein (PACRGL) from Homo sapiens (Human).